Reading from the N-terminus, the 475-residue chain is Aspartyl/glutamyl-tRNA(Asn/Gln) amidotransferase subunit B (475 aa).

It belongs to the GatB/GatE family. GatB subfamily. Heterotrimer of A, B and C subunits.

It catalyses the reaction L-glutamyl-tRNA(Gln) + L-glutamine + ATP + H2O = L-glutaminyl-tRNA(Gln) + L-glutamate + ADP + phosphate + H(+). The catalysed reaction is L-aspartyl-tRNA(Asn) + L-glutamine + ATP + H2O = L-asparaginyl-tRNA(Asn) + L-glutamate + ADP + phosphate + 2 H(+). Allows the formation of correctly charged Asn-tRNA(Asn) or Gln-tRNA(Gln) through the transamidation of misacylated Asp-tRNA(Asn) or Glu-tRNA(Gln) in organisms which lack either or both of asparaginyl-tRNA or glutaminyl-tRNA synthetases. The reaction takes place in the presence of glutamine and ATP through an activated phospho-Asp-tRNA(Asn) or phospho-Glu-tRNA(Gln). The polypeptide is Aspartyl/glutamyl-tRNA(Asn/Gln) amidotransferase subunit B (Staphylococcus aureus (strain COL)).